Consider the following 861-residue polypeptide: Probable beta-glucosidase A (861 aa).

Positions 1-19 are cleaved as a signal peptide; the sequence is MKLSILEAAALTAASVASA. N-linked (GlcNAc...) asparagine glycans are attached at residues Asn-62, Asn-212, and Asn-253. Asp-281 is a catalytic residue. Asn-316, Asn-323, Asn-355, Asn-524, Asn-543, Asn-565, Asn-669, and Asn-713 each carry an N-linked (GlcNAc...) asparagine glycan. The interval 735–754 is disordered; sequence PEGATDGSPQPRLPASGGPG.

The protein belongs to the glycosyl hydrolase 3 family.

The protein resides in the secreted. The enzyme catalyses Hydrolysis of terminal, non-reducing beta-D-glucosyl residues with release of beta-D-glucose.. The protein operates within glycan metabolism; cellulose degradation. Beta-glucosidases are one of a number of cellulolytic enzymes involved in the degradation of cellulosic biomass. Catalyzes the last step releasing glucose from the inhibitory cellobiose. This chain is Probable beta-glucosidase A (bglA), found in Aspergillus terreus.